The sequence spans 259 residues: Putative protein-disulfide oxidoreductase RBE_1288 (259 aa).

The first 20 residues, 1 to 20, serve as a signal peptide directing secretion; the sequence is MRNSFITLIFLLLLSGCSEE. The disordered stretch occupies residues 25 to 54; the sequence is VEQESSESITPAQASTSDENNNQTTETTTP. A compositionally biased stretch (polar residues) spans 33–42; it reads ITPAQASTSD. Low complexity predominate over residues 43-54; it reads ENNNQTTETTTP. One can recognise a Thioredoxin domain in the interval 47–251; sequence QTTETTTPAV…ISAAIDKAIE (205 aa). Cys-104 and Cys-107 form a disulfide bridge.

Belongs to the thioredoxin family. DsbA subfamily.

The protein localises to the periplasm. Functionally, may be required for disulfide bond formation in some proteins. In Rickettsia bellii (strain RML369-C), this protein is Putative protein-disulfide oxidoreductase RBE_1288.